A 290-amino-acid chain; its full sequence is Enoyl-CoA hydratase, mitochondrial (290 aa).

A mitochondrion-targeting transit peptide spans M1–F27. T46 carries the phosphothreonine modification. A98–K101 lines the substrate pocket. An N6-acetyllysine; alternate modification is found at K101. K101 is modified (N6-succinyllysine; alternate). At S114 the chain carries Phosphoserine. An N6-acetyllysine; alternate modification is found at K115. K115 bears the N6-succinyllysine; alternate mark. K118 carries the post-translational modification N6-acetyllysine. Substrate is bound at residue G141. The residue at position 204 (K204) is an N6-succinyllysine. K211 is modified (N6-acetyllysine).

It belongs to the enoyl-CoA hydratase/isomerase family. Homohexamer; dimer of trimers.

It localises to the mitochondrion matrix. It catalyses the reaction a (3S)-3-hydroxyacyl-CoA = a (2E)-enoyl-CoA + H2O. The catalysed reaction is a (3E)-enoyl-CoA = a 4-saturated (2E)-enoyl-CoA. The enzyme catalyses (3E)-hexenoyl-CoA = (2E)-hexenoyl-CoA. It carries out the reaction (3S)-3-hydroxybutanoyl-CoA = (2E)-butenoyl-CoA + H2O. It catalyses the reaction 3-hydroxyisovaleryl-CoA = 3-methylbut-2-enoyl-CoA + H2O. The catalysed reaction is 3-hydroxypropanoyl-CoA = acryloyl-CoA + H2O. The enzyme catalyses 3-hydroxybutanoyl-CoA = (2E)-butenoyl-CoA + H2O. It carries out the reaction 2-methylpropenoyl-CoA + H2O = (S)-3-hydroxyisobutanoyl-CoA. It catalyses the reaction (3S)-hydroxyhexanoyl-CoA = (2E)-hexenoyl-CoA + H2O. The catalysed reaction is (3S)-hydroxydecanoyl-CoA = (2E)-decenoyl-CoA + H2O. The protein operates within lipid metabolism; fatty acid beta-oxidation. In terms of biological role, converts unsaturated trans-2-enoyl-CoA species ((2E)-enoyl-CoA) to the corresponding (3S)-3-hydroxyacyl-CoA species through addition of a water molecule to the double bond. Catalyzes the hydration of medium- and short-chained fatty enoyl-CoA thioesters from 4 carbons long (C4) up to C16. Has high substrate specificity for crotonyl-CoA ((2E)-butenoyl-CoA) and moderate specificity for acryloyl-CoA, 3-methylcrotonyl-CoA (3-methyl-(2E)-butenoyl-CoA) and methacrylyl-CoA ((2E)-2-methylpropenoyl-CoA). Can bind tiglyl-CoA (2-methylcrotonoyl-CoA), but hydrates only a small amount of this substrate. Plays a key role in the beta-oxidation spiral of short- and medium-chain fatty acid oxidation. At a lower rate than the hydratase reaction, catalyzes the isomerase reaction of trans-3-enoyl-CoA species (such as (3E)-hexenoyl-CoA) to trans-2-enoyl-CoA species (such as (2E)-hexenoyl-CoA), which are subsequently hydrated to 3(S)-3-hydroxyacyl-CoA species (such as (3S)-hydroxyhexanoyl-CoA). The polypeptide is Enoyl-CoA hydratase, mitochondrial (ECHS1) (Pongo abelii (Sumatran orangutan)).